The primary structure comprises 640 residues: Chaperone protein HtpG (640 aa).

The a; substrate-binding stretch occupies residues 1–348; it reads MADVAHQETH…SNDLPLNVSR (348 aa). Residues 349-565 are b; the sequence is EILQDNKITQ…GTGMSTQMIK (217 aa). A c region spans residues 566–640; sequence LMQAAGQPVP…LNTLLMNLAK (75 aa).

The protein belongs to the heat shock protein 90 family. Homodimer.

It localises to the cytoplasm. Functionally, molecular chaperone. Has ATPase activity. The chain is Chaperone protein HtpG from Pseudoalteromonas atlantica (strain T6c / ATCC BAA-1087).